Consider the following 300-residue polypeptide: N-acetylmuramic acid 6-phosphate etherase (300 aa).

The region spanning Ile57–Lys220 is the SIS domain. Glu85 acts as the Proton donor in catalysis. Glu116 is a catalytic residue.

The protein belongs to the GCKR-like family. MurNAc-6-P etherase subfamily. Homodimer.

It carries out the reaction N-acetyl-D-muramate 6-phosphate + H2O = N-acetyl-D-glucosamine 6-phosphate + (R)-lactate. It participates in amino-sugar metabolism; 1,6-anhydro-N-acetylmuramate degradation. Its pathway is amino-sugar metabolism; N-acetylmuramate degradation. It functions in the pathway cell wall biogenesis; peptidoglycan recycling. Functionally, specifically catalyzes the cleavage of the D-lactyl ether substituent of MurNAc 6-phosphate, producing GlcNAc 6-phosphate and D-lactate. Together with AnmK, is also required for the utilization of anhydro-N-acetylmuramic acid (anhMurNAc) either imported from the medium or derived from its own cell wall murein, and thus plays a role in cell wall recycling. The sequence is that of N-acetylmuramic acid 6-phosphate etherase from Aliivibrio salmonicida (strain LFI1238) (Vibrio salmonicida (strain LFI1238)).